A 499-amino-acid chain; its full sequence is Potassium voltage-gated channel subfamily A member 2 (499 aa).

Residues 1-26 (MTVATGDPADEAAALPGHPQDTYDPE) are disordered. The interval 1 to 125 (MTVATGDPAD…YELGEEAMEM (125 aa)) is tetramerization domain. Over 1–160 (MTVATGDPAD…LLFEYPESSG (160 aa)) the chain is Cytoplasmic. The chain crosses the membrane as a helical span at residues 161–182 (PARIIAIVSVMVILISIVSFCL). Residues 183-221 (ETLPIFRDENEDMHGSGVTFHTYSNSTIGYQQSTSFTDP) lie on the Extracellular side of the membrane. Asn-207 is a glycosylation site (N-linked (GlcNAc...) asparagine). The chain crosses the membrane as a helical span at residues 222-243 (FFIVETLCIIWFSFEFLVRFFA). Cys-244 carries S-palmitoyl cysteine lipidation. At 244–254 (CPSKAGFFTNI) the chain is on the cytoplasmic side. A helical membrane pass occupies residues 255 to 275 (MNIIDIVAIIPYFITLGTELA). The Extracellular portion of the chain corresponds to 276-289 (EKPEDAQQGQQAMS). A helical; Voltage-sensor membrane pass occupies residues 290–310 (LAILRVIRLVRVFRIFKLSRH). Topologically, residues 311 to 325 (SKGLQILGQTLKASM) are cytoplasmic. The S4-S5 linker stretch occupies residues 312-325 (KGLQILGQTLKASM). A helical membrane pass occupies residues 326–347 (RELGLLIFFLFIGVILFSSAVY). Over 348 to 361 (FAEADERESQFPSI) the chain is Extracellular. Positions 362–373 (PDAFWWAVVSMT) form an intramembrane region, helical. A Selectivity filter motif is present at residues 374 to 379 (TVGYGD). Residues 374–381 (TVGYGDMV) lie within the membrane without spanning it. Residues 382-388 (PTTIGGK) are Extracellular-facing. A helical membrane pass occupies residues 389–417 (IVGSLCAIAGVLTIALPVPVIVSNFNYFY). Topologically, residues 418–499 (HRETEGEEQA…VNITKMLTDV (82 aa)) are cytoplasmic. Tyr-429 carries the phosphotyrosine modification. Residues Ser-434, Ser-440, Ser-441, and Ser-449 each carry the phosphoserine modification. Tyr-458 is subject to Phosphotyrosine. Ser-468 carries the phosphoserine modification. A PDZ-binding motif is present at residues 497-499 (TDV).

It belongs to the potassium channel family. A (Shaker) (TC 1.A.1.2) subfamily. Kv1.2/KCNA2 sub-subfamily. As to quaternary structure, homotetramer and heterotetramer with other channel-forming alpha subunits, such as KCNA1, KCNA4, KCNA5, KCNA6 and KCNA7. Channel activity is regulated by interaction with the beta subunits, including KCNAB1 and KCNAB2. Identified in a complex with KCNA1 and KCNAB2. Identified in a complex with KCNA5 and KCNAB1. Identified in a complex with KCNA4 and FYN. Interacts with the beta subunit KCNAB1. Interacts with PTK2B. Interacts (via C-terminus) with CTTN. Interacts (via N-terminal cytoplasmic domain) with RHOA (GTP-bound form); this regulates channel activity by reducing location at the cell surface in response to CHRM1 activation. Interacts with DRD2. Interacts with SIGMAR1; cocaine consumption leads to increased interaction. Interacts with ADAM22. Interacts (via C-terminus) with the PDZ domains of DLG1, DLG2 and DLG4. Interacts with CNTNAP2. Interacts with ADAM11. Interacts with LYNX1. Post-translationally, phosphorylated on tyrosine residues; phosphorylation increases in response to ischemia. Phosphorylated on tyrosine residues by activated PTK2B/PYK2. Phosphorylation on tyrosine residues suppresses ion channel activity. Phosphorylated on tyrosine residues in response to CHRM1 activation; this abolishes interaction with CTTN. This is probably due to endocytosis of the phosphorylated channel subunits. Phosphorylated on serine residues in response to increased cAMP levels; phosphorylation is apparently not catalyzed by PKA. N-glycosylated, with complex, sialylated N-glycans. Detected in brain cortex. Detected in peroneal nerve in the juxtaparanodal regions of the node of Ranvier; expression is decreased in patients with diabetes mellitus that suffer from axonal neuropathy. Detected in paranodal and juxtanodal zones in myelinated spinal cord (at protein level).

It is found in the cell membrane. Its subcellular location is the membrane. It localises to the cell projection. The protein resides in the axon. The protein localises to the synapse. It is found in the endoplasmic reticulum membrane. Its subcellular location is the lamellipodium membrane. It localises to the synaptosome. The protein resides in the presynaptic cell membrane. The protein localises to the dendrite. It is found in the cell junction. Its subcellular location is the paranodal septate junction. It carries out the reaction K(+)(in) = K(+)(out). Its activity is regulated as follows. Inhibited by 4-aminopyridine (4-AP) and charybdotoxin (CTX), but not by tetraethylammonium (TEA). Inhibited by dendrotoxin (DTX). Inhibited by tityustoxin-K alpha (TsTX-Kalpha), a toxin that is highly specific for KCNA2. Inhibited by maurotoxin. Inhibited by kappaM conotoxins kappaM-RIIIJ and kappaM-RIIIK; kappaM-RIIIJ has much higher affinity for channels containing KCNA2 than kappaM-RIIIK, with the exception of heterodimers formed by KCNA2 and KCNA7 where the opposite is true. In terms of biological role, voltage-gated potassium channel that mediates transmembrane potassium transport in excitable membranes, primarily in the brain and the central nervous system, but also in the cardiovascular system. Prevents aberrant action potential firing and regulates neuronal output. Forms tetrameric potassium-selective channels through which potassium ions pass in accordance with their electrochemical gradient. The channel alternates between opened and closed conformations in response to the voltage difference across the membrane. Can form functional homotetrameric channels and heterotetrameric channels that contain variable proportions of KCNA1, KCNA2, KCNA4, KCNA5, KCNA6, KCNA7, and possibly other family members as well; channel properties depend on the type of alpha subunits that are part of the channel. Channel properties are modulated by cytoplasmic beta subunits that regulate the subcellular location of the alpha subunits and promote rapid inactivation of delayed rectifier potassium channels. In vivo, membranes probably contain a mixture of heteromeric potassium channel complexes, making it difficult to assign currents observed in intact tissues to any particular potassium channel family member. Homotetrameric KCNA2 forms a delayed-rectifier potassium channel that opens in response to membrane depolarization, followed by slow spontaneous channel closure. In contrast, a heteromultimer formed by KCNA2 and KCNA4 shows rapid inactivation. Regulates neuronal excitability and plays a role as pacemaker in the regulation of neuronal action potentials. KCNA2-containing channels play a presynaptic role and prevent hyperexcitability and aberrant action potential firing. Response to toxins that are selective for KCNA2-containing potassium channels suggests that in Purkinje cells, dendritic subthreshold KCNA2-containing potassium channels prevent random spontaneous calcium spikes, suppressing dendritic hyperexcitability without hindering the generation of somatic action potentials, and thereby play an important role in motor coordination. Plays a role in the induction of long-term potentiation of neuron excitability in the CA3 layer of the hippocampus. May function as down-stream effector for G protein-coupled receptors and inhibit GABAergic inputs to basolateral amygdala neurons. May contribute to the regulation of neurotransmitter release, such as gamma-aminobutyric acid (GABA). Contributes to the regulation of the axonal release of the neurotransmitter dopamine. Reduced KCNA2 expression plays a role in the perception of neuropathic pain after peripheral nerve injury, but not acute pain. Plays a role in the regulation of the time spent in non-rapid eye movement (NREM) sleep. This is Potassium voltage-gated channel subfamily A member 2 (KCNA2) from Homo sapiens (Human).